The following is a 164-amino-acid chain: V-type proton ATPase 16 kDa proteolipid subunit (164 aa).

Residues 1–9 (MASFSGDET) are Lumenal-facing. The helical transmembrane segment at 10-32 (APFFGFLGAAAALVFSCMGAAYG) threads the bilayer. At 33–54 (TAKSGVGVASMGVMRPELVMKS) the chain is on the cytoplasmic side. A helical transmembrane segment spans residues 55 to 75 (IVPVVMAGVLGIYGLIIAVII). The Lumenal segment spans residues 76-94 (STGINPKAKSYYLFDGYAH). A helical transmembrane segment spans residues 95–116 (LSSGLACGLAGLSAGMAIGIVG). The Cytoplasmic segment spans residues 117–128 (DAGVRANAQQPK). A helical membrane pass occupies residues 129 to 154 (LFVGMILILIFAEALALYGLIVGIIL). At 155 to 164 (SSRAGQSRAD) the chain is on the lumenal side.

It belongs to the V-ATPase proteolipid subunit family. V-ATPase is a heteromultimeric enzyme composed of a peripheral catalytic V1 complex (main components: subunits A, B, C, D, E, and F) attached to an integral membrane V0 proton pore complex (main component: the proteolipid protein; which is present as a hexamer that forms the proton-conducting pore).

It is found in the vacuole membrane. In terms of biological role, proton-conducting pore forming subunit of the membrane integral V0 complex of vacuolar ATPase. V-ATPase is responsible for acidifying a variety of intracellular compartments in eukaryotic cells. In Vigna radiata var. radiata (Mung bean), this protein is V-type proton ATPase 16 kDa proteolipid subunit.